A 32-amino-acid chain; its full sequence is Calcitonin (32 aa).

A disulfide bridge connects residues C1 and C7. P32 bears the Proline amide mark.

This sequence belongs to the calcitonin family.

Its subcellular location is the secreted. In terms of biological role, causes a rapid but short-lived drop in the level of calcium and phosphate in blood by promoting the incorporation of those ions in the bones. This is Calcitonin from Anguilla japonica (Japanese eel).